Here is a 130-residue protein sequence, read N- to C-terminus: Protein NrdI (130 aa).

This sequence belongs to the NrdI family.

Its function is as follows. Probably involved in ribonucleotide reductase function. This is Protein NrdI from Bacillus velezensis (strain DSM 23117 / BGSC 10A6 / LMG 26770 / FZB42) (Bacillus amyloliquefaciens subsp. plantarum).